Reading from the N-terminus, the 484-residue chain is Antibiotic efflux pump outer membrane protein ArpC (484 aa).

The N-terminal stretch at 1-17 is a signal peptide; the sequence is MTKSLLSLAVTAFILGG. Cys18 carries the N-palmitoyl cysteine lipid modification. Residue Cys18 is the site of S-diacylglycerol cysteine attachment.

The protein belongs to the outer membrane factor (OMF) (TC 1.B.17) family.

The protein resides in the cell outer membrane. Functionally, the outer membrane component of an antibiotic efflux pump. Confers resistance to numerous structurally unrelated antibiotics such as carbenicillin, chloramphenicol, erythromycin, novobiocin, streptomycin and tetracycline. Is not involved in organic solvent efflux. This chain is Antibiotic efflux pump outer membrane protein ArpC (arpC), found in Pseudomonas putida (Arthrobacter siderocapsulatus).